Here is a 322-residue protein sequence, read N- to C-terminus: MNDATRTSTTPPALPMPDLRDSFPGPFPASAHADDIERHATQWLRTFPLIRSERALSALTHITGQGVARTFPTAGRDELFLCADLFLWLTAFDDAHGEATGAADPARLLRTTSEYVHLLAGHHEPPGGPSVFGAALRDLLDRYGERATPAQYARLTAHLRDNLFGILWEAHHLHRPDRVTLPDYLAMRPHTVFVRTVVATAEVMLGYELTEPDRSSEPVRELETAVADLAGWINDLASYAKETARDGSATLGLPALLMRQHECDLEEAFRRASLMCEQQAAVAAARIAELTAGGGPLADHAHALRSVASSYVWHIDDSRYRT.

Residues 1–11 (MNDATRTSTTP) show a composition bias toward polar residues. Residues 1–26 (MNDATRTSTTPPALPMPDLRDSFPGP) are disordered. Residues aspartate 93 and glutamate 98 each contribute to the Mg(2+) site. The short motif at 93–98 (DDAHGE) is the DDXXXE motif element. Arginine 188 lines the substrate pocket. Mg(2+) is bound by residues asparagine 234 and serine 238. The NXXXSXXXE motif motif lies at 234–242 (NDLASYAKE). Position 241 (lysine 241) interacts with substrate. Glutamate 242 serves as a coordination point for Mg(2+). 319–320 (RY) lines the substrate pocket.

This sequence belongs to the terpene synthase family. The cofactor is Mg(2+).

The enzyme catalyses (+)-copalyl diphosphate = (12E)-labda-8(17),12,14-triene + diphosphate. In terms of biological role, involved in the biosynthesis of the labdane-type bicyclic diterpene labda-8(17),12(E),14-triene. Catalyzes the conversion of (+)-copalyl diphosphate to yield labda-8(17),12(E),14-triene. This Streptomyces anulatus (Streptomyces chrysomallus) protein is (12E)-labda-8(17),12,14-triene synthase.